The chain runs to 569 residues: Proline--tRNA ligase (569 aa).

Belongs to the class-II aminoacyl-tRNA synthetase family. ProS type 1 subfamily. As to quaternary structure, homodimer.

It localises to the cytoplasm. The catalysed reaction is tRNA(Pro) + L-proline + ATP = L-prolyl-tRNA(Pro) + AMP + diphosphate. Functionally, catalyzes the attachment of proline to tRNA(Pro) in a two-step reaction: proline is first activated by ATP to form Pro-AMP and then transferred to the acceptor end of tRNA(Pro). As ProRS can inadvertently accommodate and process non-cognate amino acids such as alanine and cysteine, to avoid such errors it has two additional distinct editing activities against alanine. One activity is designated as 'pretransfer' editing and involves the tRNA(Pro)-independent hydrolysis of activated Ala-AMP. The other activity is designated 'posttransfer' editing and involves deacylation of mischarged Ala-tRNA(Pro). The misacylated Cys-tRNA(Pro) is not edited by ProRS. The sequence is that of Proline--tRNA ligase from Levilactobacillus brevis (strain ATCC 367 / BCRC 12310 / CIP 105137 / JCM 1170 / LMG 11437 / NCIMB 947 / NCTC 947) (Lactobacillus brevis).